Consider the following 385-residue polypeptide: Mannitol-1-phosphate 5-dehydrogenase (385 aa).

Position 3–14 (aspartate 3–glycine 14) interacts with NAD(+).

This sequence belongs to the mannitol dehydrogenase family.

The enzyme catalyses D-mannitol 1-phosphate + NAD(+) = beta-D-fructose 6-phosphate + NADH + H(+). The polypeptide is Mannitol-1-phosphate 5-dehydrogenase (Lactiplantibacillus plantarum (strain ATCC BAA-793 / NCIMB 8826 / WCFS1) (Lactobacillus plantarum)).